Reading from the N-terminus, the 187-residue chain is Large ribosomal subunit protein uL10 (187 aa).

The protein belongs to the universal ribosomal protein uL10 family. In terms of assembly, part of the ribosomal stalk of the 50S ribosomal subunit. The N-terminus interacts with L11 and the large rRNA to form the base of the stalk. The C-terminus forms an elongated spine to which L12 dimers bind in a sequential fashion forming a multimeric L10(L12)X complex.

Its function is as follows. Forms part of the ribosomal stalk, playing a central role in the interaction of the ribosome with GTP-bound translation factors. This is Large ribosomal subunit protein uL10 from Synechococcus sp. (strain JA-3-3Ab) (Cyanobacteria bacterium Yellowstone A-Prime).